Here is a 469-residue protein sequence, read N- to C-terminus: Sulfate adenylyltransferase subunit 1 (469 aa).

A tr-type G domain is found at 22 to 236 (KDMLRVLTCG…LLNTVSVEQD (215 aa)). The interval 31-38 (GSVDDGKS) is G1. A GTP-binding site is contributed by 31-38 (GSVDDGKS). Residues 89–93 (GITID) are G2. Residues 110 to 113 (DTPG) form a G3 region. GTP contacts are provided by residues 110–114 (DTPGH) and 165–168 (NKMD). Positions 165–168 (NKMD) are G4. Positions 202 to 204 (SAL) are G5.

Belongs to the TRAFAC class translation factor GTPase superfamily. Classic translation factor GTPase family. CysN/NodQ subfamily. As to quaternary structure, heterodimer composed of CysD, the smaller subunit, and CysN.

The enzyme catalyses sulfate + ATP + H(+) = adenosine 5'-phosphosulfate + diphosphate. It functions in the pathway sulfur metabolism; hydrogen sulfide biosynthesis; sulfite from sulfate: step 1/3. With CysD forms the ATP sulfurylase (ATPS) that catalyzes the adenylation of sulfate producing adenosine 5'-phosphosulfate (APS) and diphosphate, the first enzymatic step in sulfur assimilation pathway. APS synthesis involves the formation of a high-energy phosphoric-sulfuric acid anhydride bond driven by GTP hydrolysis by CysN coupled to ATP hydrolysis by CysD. This chain is Sulfate adenylyltransferase subunit 1, found in Shewanella woodyi (strain ATCC 51908 / MS32).